Here is a 663-residue protein sequence, read N- to C-terminus: Translation factor GUF1 homolog, mitochondrial (663 aa).

One can recognise a tr-type G domain in the interval E64–P250. GTP contacts are provided by residues A73–S80, D143–H147, and N197–D200.

This sequence belongs to the TRAFAC class translation factor GTPase superfamily. Classic translation factor GTPase family. LepA subfamily.

The protein localises to the mitochondrion inner membrane. It carries out the reaction GTP + H2O = GDP + phosphate + H(+). Its function is as follows. Promotes mitochondrial protein synthesis. May act as a fidelity factor of the translation reaction, by catalyzing a one-codon backward translocation of tRNAs on improperly translocated ribosomes. Binds to mitochondrial ribosomes in a GTP-dependent manner. This is Translation factor GUF1 homolog, mitochondrial from Arabidopsis thaliana (Mouse-ear cress).